The sequence spans 291 residues: Acetyl-coenzyme A carboxylase carboxyl transferase subunit beta (291 aa).

One can recognise a CoA carboxyltransferase N-terminal domain in the interval 23–291 (VWHKCPSCTA…PPDLPVEESV (269 aa)). Cys27, Cys30, Cys46, and Cys49 together coordinate Zn(2+). The C4-type zinc finger occupies 27-49 (CPSCTAVLYRVELERNLEVCPKC).

This sequence belongs to the AccD/PCCB family. In terms of assembly, acetyl-CoA carboxylase is a heterohexamer composed of biotin carboxyl carrier protein (AccB), biotin carboxylase (AccC) and two subunits each of ACCase subunit alpha (AccA) and ACCase subunit beta (AccD). Zn(2+) is required as a cofactor.

The protein resides in the cytoplasm. It catalyses the reaction N(6)-carboxybiotinyl-L-lysyl-[protein] + acetyl-CoA = N(6)-biotinyl-L-lysyl-[protein] + malonyl-CoA. It functions in the pathway lipid metabolism; malonyl-CoA biosynthesis; malonyl-CoA from acetyl-CoA: step 1/1. Its function is as follows. Component of the acetyl coenzyme A carboxylase (ACC) complex. Biotin carboxylase (BC) catalyzes the carboxylation of biotin on its carrier protein (BCCP) and then the CO(2) group is transferred by the transcarboxylase to acetyl-CoA to form malonyl-CoA. The chain is Acetyl-coenzyme A carboxylase carboxyl transferase subunit beta from Coxiella burnetii (strain Dugway 5J108-111).